A 352-amino-acid chain; its full sequence is Fc receptor-like A (352 aa).

Residues 1–30 (MKLSCTLTQWALYVCPAVLLATQMLLAASS) form the signal peptide. The disordered stretch occupies residues 46–65 (CQAAAEEDEGDEDDGDMTQS). Residues 50-61 (AEEDEGDEDDGD) are compositionally biased toward acidic residues. 2 consecutive Ig-like C2-type domains span residues 80–169 (PFHL…EAAS) and 182–260 (PVLK…RQIS). Disulfide bonds link C109/C153 and C202/C250. The interval 275 to 310 (KPTASETPPTEALGPLPPPPASSAEQPRFSSPDPHL) is disordered.

In terms of assembly, monomer or homodimer; disulfide-linked. Highly expressed in spleen. Expressed in immature B-cell and B-cell lines.

It localises to the cytoplasm. Its function is as follows. May be implicated in B-cell differentiation and lymphomagenesis. This chain is Fc receptor-like A (Fcrla), found in Mus musculus (Mouse).